A 365-amino-acid chain; its full sequence is MSGSTFGNLFAVTNFGESHGPAIGCVIDGCPPGLALTEADIQTDLDRRRPGTSRHVTQRNEPDAVEILSGVYEGKTTGTPICLLIRNTDQRSKDYGNILETFRPGHADYSYLHKYGRRDPRGGGRASARLTAPMVAAGAVAKKWLAEKYGTSFRGCMAQIGDIAIPFESWEHVPRNPFFAPVADVSHLEDYMDALRKAGDSCGARIRVTASGVPVGLGEPLFDKLDADIAFAMMGINAVKGVEIGAGFASVTQRGTTHGDSLSPEGFLSNNAGGVLGGISTGQDLEVSIAIKPTSSIITPRQSIDTAGNPAEVVTKGRHDPCVGIRATPIAEAMLALVVMEHALRQRAQNADVTVSTPDIMRARG.

Positions 48 and 54 each coordinate NADP(+). FMN is bound by residues Arg125–Ser127, Asn237–Ala238, Gly277, Lys292–Ser296, and Arg318.

It belongs to the chorismate synthase family. Homotetramer. FMNH2 serves as cofactor.

It carries out the reaction 5-O-(1-carboxyvinyl)-3-phosphoshikimate = chorismate + phosphate. Its pathway is metabolic intermediate biosynthesis; chorismate biosynthesis; chorismate from D-erythrose 4-phosphate and phosphoenolpyruvate: step 7/7. In terms of biological role, catalyzes the anti-1,4-elimination of the C-3 phosphate and the C-6 proR hydrogen from 5-enolpyruvylshikimate-3-phosphate (EPSP) to yield chorismate, which is the branch point compound that serves as the starting substrate for the three terminal pathways of aromatic amino acid biosynthesis. This reaction introduces a second double bond into the aromatic ring system. The chain is Chorismate synthase from Polaromonas sp. (strain JS666 / ATCC BAA-500).